The primary structure comprises 232 residues: 5'-methylthioadenosine/S-adenosylhomocysteine nucleosidase (232 aa).

E12 functions as the Proton acceptor in the catalytic mechanism. Residues G78, I152, and 173-174 contribute to the substrate site; that span reads ME. Catalysis depends on D197, which acts as the Proton donor.

This sequence belongs to the PNP/UDP phosphorylase family. MtnN subfamily. In terms of assembly, homodimer.

The enzyme catalyses S-adenosyl-L-homocysteine + H2O = S-(5-deoxy-D-ribos-5-yl)-L-homocysteine + adenine. The catalysed reaction is S-methyl-5'-thioadenosine + H2O = 5-(methylsulfanyl)-D-ribose + adenine. It catalyses the reaction 5'-deoxyadenosine + H2O = 5-deoxy-D-ribose + adenine. It functions in the pathway amino-acid biosynthesis; L-methionine biosynthesis via salvage pathway; S-methyl-5-thio-alpha-D-ribose 1-phosphate from S-methyl-5'-thioadenosine (hydrolase route): step 1/2. Catalyzes the irreversible cleavage of the glycosidic bond in both 5'-methylthioadenosine (MTA) and S-adenosylhomocysteine (SAH/AdoHcy) to adenine and the corresponding thioribose, 5'-methylthioribose and S-ribosylhomocysteine, respectively. Also cleaves 5'-deoxyadenosine, a toxic by-product of radical S-adenosylmethionine (SAM) enzymes, into 5-deoxyribose and adenine. Thus, is required for in vivo function of the radical SAM enzymes biotin synthase and lipoic acid synthase, that are inhibited by 5'-deoxyadenosine accumulation. This Salmonella arizonae (strain ATCC BAA-731 / CDC346-86 / RSK2980) protein is 5'-methylthioadenosine/S-adenosylhomocysteine nucleosidase.